The primary structure comprises 227 residues: Esterase Rv3036c (227 aa).

A helical membrane pass occupies residues 3–23 (YLIATAVLVAVVLVGWPAAGA).

It belongs to the RsiV family.

The protein resides in the cell membrane. Its subcellular location is the secreted. It localises to the cell wall. The catalysed reaction is a fatty acid ester + H2O = an aliphatic alcohol + a fatty acid + H(+). It catalyses the reaction an acetyl ester + H2O = an aliphatic alcohol + acetate + H(+). It carries out the reaction a butanoate ester + H2O = an aliphatic alcohol + butanoate + H(+). The enzyme catalyses a hexanoate ester + H2O = an aliphatic alcohol + hexanoate + H(+). The catalysed reaction is a dodecanoate ester + H2O = an aliphatic alcohol + dodecanoate + H(+). It catalyses the reaction a tetradecanoate ester + H2O = an aliphatic alcohol + tetradecanoate + H(+). It carries out the reaction an octanoate ester + H2O = an aliphatic alcohol + octanoate + H(+). Its function is as follows. Hydrolyzes ester substrates carbon chain lengths ranging from C2 to C14. In vitro, acetate (C2), butyrate (C4) and caprylate (C6) are hydrolyzed with high efficiency. Has lower activity against laurate (C12), myristate (C14) and caproate (C8), and weak activity against palmitate (C16). This chain is Esterase Rv3036c, found in Mycobacterium tuberculosis (strain ATCC 25618 / H37Rv).